Here is a 545-residue protein sequence, read N- to C-terminus: CTP synthase (545 aa).

The amidoligase domain stretch occupies residues 1-266 (MTTNYIFVTG…DDYICKRFSL (266 aa)). Residue serine 14 coordinates CTP. A UTP-binding site is contributed by serine 14. ATP-binding positions include 15-20 (SLGKGI) and aspartate 72. 2 residues coordinate Mg(2+): aspartate 72 and glutamate 140. CTP contacts are provided by residues 147-149 (DIE), 187-192 (KTKPTQ), and lysine 223. UTP-binding positions include 187–192 (KTKPTQ) and lysine 223. 239–241 (KDV) is a binding site for ATP. In terms of domain architecture, Glutamine amidotransferase type-1 spans 291 to 542 (TIGMVGKYIE…VKAASEHQKR (252 aa)). Glycine 352 lines the L-glutamine pocket. Cysteine 379 serves as the catalytic Nucleophile; for glutamine hydrolysis. L-glutamine is bound by residues 380 to 383 (LGMQ), glutamate 403, and arginine 470. Residues histidine 515 and glutamate 517 contribute to the active site.

Belongs to the CTP synthase family. In terms of assembly, homotetramer.

The enzyme catalyses UTP + L-glutamine + ATP + H2O = CTP + L-glutamate + ADP + phosphate + 2 H(+). It catalyses the reaction L-glutamine + H2O = L-glutamate + NH4(+). It carries out the reaction UTP + NH4(+) + ATP = CTP + ADP + phosphate + 2 H(+). It functions in the pathway pyrimidine metabolism; CTP biosynthesis via de novo pathway; CTP from UDP: step 2/2. Its activity is regulated as follows. Allosterically activated by GTP, when glutamine is the substrate; GTP has no effect on the reaction when ammonia is the substrate. The allosteric effector GTP functions by stabilizing the protein conformation that binds the tetrahedral intermediate(s) formed during glutamine hydrolysis. Inhibited by the product CTP, via allosteric rather than competitive inhibition. Its function is as follows. Catalyzes the ATP-dependent amination of UTP to CTP with either L-glutamine or ammonia as the source of nitrogen. Regulates intracellular CTP levels through interactions with the four ribonucleotide triphosphates. This is CTP synthase from Salmonella arizonae (strain ATCC BAA-731 / CDC346-86 / RSK2980).